Here is a 542-residue protein sequence, read N- to C-terminus: Cytochrome P450 monooxygenase TRI1 (542 aa).

Residues 37-54 (LIYFLCFVVLGRAVQWFL) form a helical membrane-spanning segment. N-linked (GlcNAc...) asparagine glycosylation is found at Asn-167, Asn-297, and Asn-428. Heme is bound at residue Cys-469.

Belongs to the cytochrome P450 family. Heme is required as a cofactor.

It is found in the membrane. It participates in sesquiterpene biosynthesis; trichothecene biosynthesis. Functionally, cytochrome P450 monooxygenase; part of 2-gene cluster involved in trichothecene C-8 modification that mediates the biosynthesis of T2-toxin. The biosynthesis of trichothecenes begins with the cyclization of farnesyl diphosphate to trichodiene and is catalyzed by the trichodiene synthase TRI5. Trichodiene undergoes a series of oxygenations catalyzed by the cytochrome P450 monooxygenase TRI4. TRI4 controls the addition of four oxygens at C-2, C-3, C-11, and the C-12, C-13-epoxide to form the intermediate isotrichotriol. Isotrichotriol then undergoes a non-enzymatic isomerization and cyclization to form isotrichodermol. During this process, the oxygen at the C-2 position becomes the pyran ring oxygen and the hydroxyl group at C-11 is lost. More complex type A trichothecenes are built by modifying isotrichodermol through a series of paired hydroxylation and acetylation or acylation steps. Isotrichodermol is converted to isotrichodermin by the acetyltransferase TRI101. TRI101 encodes a C-3 transacetylase that acts as a self-protection or resistance factor during biosynthesis and that the presence of a free C-3 hydroxyl group is a key component of Fusarium trichothecene phytotoxicity. A second hydroxyl group is added to C-15 by the trichothecene C-15 hydroxylase TRI11, producing 15-decalonectrin, which is then acetylated by TRI3, producing calonectrin. A third hydroxyl group is added at C-4 by the cytochrome P450 monooxygenase TRI13, converting calonectrin to 3,15-diacetoxyspirpenol, which is subsequently acetylated by the acetyltransferase TRI7. A fourth hydroxyl group is added to C-8 by the cytochrome P450 monooxygenase TRI1, followed by the addition of an isovaleryl moiety by TRI16. Finally, the acetyl group is removed from the C-3 position by the trichothecene C-3 esterase TRI8 to produce T-2 toxin. The protein is Cytochrome P450 monooxygenase TRI1 of Fusarium sporotrichioides.